The following is a 335-amino-acid chain: 2,4-dienoyl-CoA reductase [(3E)-enoyl-CoA-producing], mitochondrial (335 aa).

Residues 1–34 (MALLGRAFFAGVSRLPCDPGPQRFFSFGTKTLYQ) constitute a mitochondrion transit peptide. 2 positions are modified to N6-acetyllysine; alternate: K42 and K49. K42 and K49 each carry N6-succinyllysine; alternate. 66-71 (GGGTGL) is an NADP(+) binding site. Residue T69 is modified to Phosphothreonine. Residue K73 is modified to N6-succinyllysine. Position 91 (R91) interacts with NADP(+). Position 91 (R91) interacts with substrate. K97 and K106 each carry N6-acetyllysine; alternate. K97 and K106 each carry N6-succinyllysine; alternate. Residue D117 coordinates NADP(+). Residues R119 and F149 each coordinate substrate. Residue Y199 is the Proton acceptor of the active site. NADP(+) is bound by residues K214 and 240 to 243 (PGPI). K244 is subject to N6-acetyllysine; alternate. Position 244 is an N6-succinyllysine; alternate (K244). Position 251 (R251) interacts with substrate. K260 carries the post-translational modification N6-acetyllysine; alternate. Residue K260 is modified to N6-succinyllysine; alternate. K315 is subject to N6-acetyllysine. Residue K319 is modified to N6-acetyllysine; alternate. N6-succinyllysine; alternate is present on K319.

The protein belongs to the short-chain dehydrogenases/reductases (SDR) family. 2,4-dienoyl-CoA reductase subfamily. As to quaternary structure, homotetramer.

Its subcellular location is the mitochondrion. The catalysed reaction is a (2E,4E)-dienoyl-CoA + NADPH + H(+) = a 4,5-saturated-(3E)-enoyl-CoA + NADP(+). It catalyses the reaction a (2E,4Z)-dienoyl-CoA + NADPH + H(+) = a 4,5-saturated-(3E)-enoyl-CoA + NADP(+). It carries out the reaction (2E,4E)-hexadienoyl-CoA + NADPH + H(+) = (3E)-hexenoyl-CoA + NADP(+). Its function is as follows. Auxiliary enzyme of beta-oxidation. It participates in the metabolism of unsaturated fatty enoyl-CoA esters having double bonds in both even- and odd-numbered positions in mitochondria. Catalyzes the NADP-dependent reduction of 2,4-dienoyl-CoA to yield trans-3-enoyl-CoA. In Mus musculus (Mouse), this protein is 2,4-dienoyl-CoA reductase [(3E)-enoyl-CoA-producing], mitochondrial (Decr1).